A 143-amino-acid chain; its full sequence is Hemoglobin subunit alpha (143 aa).

A Globin domain is found at R2–R143. H60 provides a ligand contact to O2. Residue H89 participates in heme b binding.

The protein belongs to the globin family. Heterotetramer of two alpha chains and two beta chains. In terms of tissue distribution, red blood cells.

In terms of biological role, involved in oxygen transport from the lung to the various peripheral tissues. The protein is Hemoglobin subunit alpha (HBA) of Lepidosiren paradoxus (South American lungfish).